Here is a 152-residue protein sequence, read N- to C-terminus: Large ribosomal subunit protein uL15 (152 aa).

The tract at residues 1-66 (MLQLHTIKPN…PLHRRLPKKG (66 aa)) is disordered. Residues 24–36 (ESSGLGKTCGKGN) show a composition bias toward gly residues.

The protein belongs to the universal ribosomal protein uL15 family. As to quaternary structure, part of the 50S ribosomal subunit.

Its function is as follows. Binds to the 23S rRNA. This is Large ribosomal subunit protein uL15 from Akkermansia muciniphila (strain ATCC BAA-835 / DSM 22959 / JCM 33894 / BCRC 81048 / CCUG 64013 / CIP 107961 / Muc).